A 223-amino-acid polypeptide reads, in one-letter code: Endonuclease V (223 aa).

Mg(2+)-binding residues include Asp-45 and Asp-113.

The protein belongs to the endonuclease V family. Mg(2+) serves as cofactor.

Its subcellular location is the cytoplasm. It carries out the reaction Endonucleolytic cleavage at apurinic or apyrimidinic sites to products with a 5'-phosphate.. Functionally, DNA repair enzyme involved in the repair of deaminated bases. Selectively cleaves double-stranded DNA at the second phosphodiester bond 3' to a deoxyinosine leaving behind the intact lesion on the nicked DNA. The protein is Endonuclease V of Dehalococcoides mccartyi (strain ATCC BAA-2100 / JCM 16839 / KCTC 5957 / BAV1).